A 355-amino-acid polypeptide reads, in one-letter code: tRNA pseudouridine synthase D (355 aa).

The active-site Nucleophile is Asp-84. A TRUD domain is found at Gly-160–Leu-306.

This sequence belongs to the pseudouridine synthase TruD family.

It carries out the reaction uridine(13) in tRNA = pseudouridine(13) in tRNA. Responsible for synthesis of pseudouridine from uracil-13 in transfer RNAs. In Pseudomonas aeruginosa (strain ATCC 15692 / DSM 22644 / CIP 104116 / JCM 14847 / LMG 12228 / 1C / PRS 101 / PAO1), this protein is tRNA pseudouridine synthase D.